Consider the following 1794-residue polypeptide: MMVFQSFILGNLVSLCMKIINSVVVVGLYYGFLTTFSIGPSYLFLLRARVMDEGEEGTEKKVSATTGFIAGQLMMFISIYYAPLHLALGRPHTITVLALPYLLFHFFWNNHKHFFDYGSTTRNEMRNLRIQCVFLNNLIFQLFNHFILPSSMLARLVNIYMFRCNNKMLFVTSSFVGWLIGHILFMKWVGLVLVWIQQNNSIRSNVLIRSNKYKFLVSELRNSMARIFSILLFITCVYYLGRIPSPIFTKKLKGTSETGGTKQDQEVSTEEAPFPSLFSEEGEDLDKIDEMEEIRVNGKDKINKDDEFHVRTYYNYKTVSENLDGNKENSNLEFFKIKKKEDHFLWFEKPFVTLVFDYKRWNRPNRYIKNDKIENTVRNEMSQYFFYTCQSDGKERISFTYPPNLSTFFEMIQKRIPSFTREKTPSDQVSTYWSFIHEEKKENLKKAFLNRIEALDKEWSVENILEKTTRFCYNEAKKEYLPKIYDPFLHGVSRGKIKKLPPLQIITKTYRKNNIGRSWINKIHGLLLKINYHKFEQTIEKFNRKSLSIEKKLSFFSEPQQEEKIHSEEEIKVFKFLFDIVRTDSNDQTLIKNFSDFHEINKKVPRWSYKLISELEELEGENEENVPMEPGIRSRKAKRVVVFTDKEPHDEIYTNLKDNQNSDQKDEMALIRYSQQSDFRREIIKGSMRSQRRKTVIWDFFQAKVHSPLFFDRIDKLFFFSFDIWGLKKQILRNFMWKNKKKNFDKKEEEQSKIEEKRRIEIAETWDSFLFAQIIRGSLLVIQSILRKYIILPLLIIIKNSVRMLLFQFPEWSEDLKDWKREMHVKCTYNGVQLSETEFPRNWLTDGIQIKILFPFYLKPWHKSKFQASQKARLKKTTDKREKNDFCFLTVWGTETELPFGSAQKKPSFFEPIFKELKKRIKKLKTKSFLVLSIFKERATIFLKVAKEIKNWILKNFLFIKGKIKDLSKRNKIPVFDSREIYELNVNQTKKDSIISNQMINELSVQKKSMEWTNSSLSENKIKNLIDRIKTIRNQIEEISKEKQNLTNSCTKLRYDSKIIESSKKIWQTFKRKNTRLIRKSIFFIKFCIEQLSRAFFLGIINIPRTTIQLFFESTKTILDKYIYKNQENGEKKKKKNTIYFISTIKNLISKKKISYDLCSLSQAYVFYKLSQIKVSNFSKLKDVFEYNIRITSFFVKNQIKVFFQEQGIFHYELKNKTFLNSEVNQWKNWLRSHYQYNLPQIAWARLVTQNWKKKINKDSLVLNPSLTKEDSYEKKKFDNYKKQNFFEADALLNPKHNFKKDSIYNLFCYKSIHSTEKNLDMSIGIALDNCLVSSFLEKYNIRGIGEIRHRKYLDWRILNFWFTKKVNIEPWVDTKSKKKYINTKVQNYQRIDKITKTGLANQKRNFFDWMGMNEEILNHRITNFEFFFFPEFLLFSSTYKIKPWVIPIKLLLLNFTENINVSKNITRKKKGFIPSNEKKSLRFYNLTKEEKESAGQVELESDKEKKRNPESALLNQEKNIEENYAESTIKKRKNKKQYKSNSEAELDLFLTRYSRFQLRWNCFFNQKILNNVKVYCLLVRLKNPNEIAISSIERGEMSLDILMIEKNFTFAKLMKKGILIIEPIRLSVQNDGQLIIYRTIGISLVHKNKHKISKRYKKKSYIDKKKIEKSITKYQKKTVNRKKNNYDFFVPENILSPKRRREFRILICFNLKKKTVRDRNSRFDKNIQNWTTVLHKKKDLDKDKKNLINLKSFLWPNFKLKNLACMNRYWFNTTNGNHFSMIRIRMYTRFPIH.

The next 6 membrane-spanning stretches (helical) occupy residues 19 to 39, 68 to 88, 91 to 111, 133 to 153, 176 to 196, and 227 to 247; these read IINSVVVVGLYYGFLTTFSIG, FIAGQLMMFISIYYAPLHLAL, PHTITVLALPYLLFHFFWNNH, VFLNNLIFQLFNHFILPSSML, VGWLIGHILFMKWVGLVLVWI, and IFSILLFITCVYYLGRIPSPI.

This sequence belongs to the TIC214 family. In terms of assembly, part of the Tic complex.

It is found in the plastid. It localises to the chloroplast inner membrane. Functionally, involved in protein precursor import into chloroplasts. May be part of an intermediate translocation complex acting as a protein-conducting channel at the inner envelope. This chain is Protein TIC 214, found in Olimarabidopsis pumila (Dwarf rocket).